A 274-amino-acid chain; its full sequence is 2,3,4,5-tetrahydropyridine-2,6-dicarboxylate N-succinyltransferase (274 aa).

Substrate is bound by residues arginine 104 and aspartate 141.

This sequence belongs to the transferase hexapeptide repeat family. In terms of assembly, homotrimer.

It is found in the cytoplasm. It catalyses the reaction (S)-2,3,4,5-tetrahydrodipicolinate + succinyl-CoA + H2O = (S)-2-succinylamino-6-oxoheptanedioate + CoA. The protein operates within amino-acid biosynthesis; L-lysine biosynthesis via DAP pathway; LL-2,6-diaminopimelate from (S)-tetrahydrodipicolinate (succinylase route): step 1/3. The sequence is that of 2,3,4,5-tetrahydropyridine-2,6-dicarboxylate N-succinyltransferase from Shewanella frigidimarina (strain NCIMB 400).